A 331-amino-acid chain; its full sequence is MRAPEFWHKDGFAARLLEPVGLVYAALTRHRVARPPGVRLGIPVVCVGNLTAGGAGKTPVALAVMDALRRRGVVGHFLSRGYGGKMEGPVAVDPVGHGPEDVGDEPLLLANSAPCWVSRNRASGGLVAEGAGAQAVVMDDGHQNPSLAKDLSLVVVDGGYGFGNGRYIPAGPLRESIEAGLARAGAVILIGSDSENLAARIPPHLKAGVPLLTARLEPGPEAARLVGRKVVAFAGIGRPEKFFATLTALGARVVARHPFADHYPYAEADIQPILDEAYGLGAVPVTTSKDAVRLPPDQRPQVDVVGVRVVFDEPLAFEALIDRLILGRLPS.

51-58 (TAGGAGKT) lines the ATP pocket.

It belongs to the LpxK family.

The catalysed reaction is a lipid A disaccharide + ATP = a lipid IVA + ADP + H(+). It functions in the pathway glycolipid biosynthesis; lipid IV(A) biosynthesis; lipid IV(A) from (3R)-3-hydroxytetradecanoyl-[acyl-carrier-protein] and UDP-N-acetyl-alpha-D-glucosamine: step 6/6. In terms of biological role, transfers the gamma-phosphate of ATP to the 4'-position of a tetraacyldisaccharide 1-phosphate intermediate (termed DS-1-P) to form tetraacyldisaccharide 1,4'-bis-phosphate (lipid IVA). The protein is Tetraacyldisaccharide 4'-kinase of Rhodospirillum rubrum (strain ATCC 11170 / ATH 1.1.1 / DSM 467 / LMG 4362 / NCIMB 8255 / S1).